The sequence spans 318 residues: GTP cyclohydrolase MptA (318 aa).

This sequence belongs to the GTP cyclohydrolase IV family. In terms of assembly, homodimer. It depends on Fe(2+) as a cofactor.

The enzyme catalyses GTP + H2O = 7,8-dihydroneopterin 2',3'-cyclic phosphate + formate + diphosphate + H(+). It functions in the pathway cofactor biosynthesis; 5,6,7,8-tetrahydromethanopterin biosynthesis. Functionally, converts GTP to 7,8-dihydro-D-neopterin 2',3'-cyclic phosphate, the first intermediate in the biosynthesis of coenzyme methanopterin. This Methanosarcina acetivorans (strain ATCC 35395 / DSM 2834 / JCM 12185 / C2A) protein is GTP cyclohydrolase MptA.